We begin with the raw amino-acid sequence, 750 residues long: Polyribonucleotide nucleotidyltransferase (750 aa).

Mg(2+) contacts are provided by aspartate 492 and aspartate 498. The KH domain maps to 559 to 618; it reads PQLSVVEVNPEIIRVIIGPGGKNIKAITSATGASIDIEDSGRISIFAPTKESMDMAREMV. The S1 motif domain maps to 628–695; sequence GKNYTAKVRK…NDGRVRASRK (68 aa). Residues 705–750 are disordered; it reads EWDPADTARPPRKPRDRDDRGDRGGRGDRGDRGGRNGRGGDRRDRR. Residues 717–750 are compositionally biased toward basic and acidic residues; it reads KPRDRDDRGDRGGRGDRGDRGGRNGRGGDRRDRR.

It belongs to the polyribonucleotide nucleotidyltransferase family. Mg(2+) is required as a cofactor.

The protein localises to the cytoplasm. It catalyses the reaction RNA(n+1) + phosphate = RNA(n) + a ribonucleoside 5'-diphosphate. In terms of biological role, involved in mRNA degradation. Catalyzes the phosphorolysis of single-stranded polyribonucleotides processively in the 3'- to 5'-direction. The sequence is that of Polyribonucleotide nucleotidyltransferase from Oleidesulfovibrio alaskensis (strain ATCC BAA-1058 / DSM 17464 / G20) (Desulfovibrio alaskensis).